Reading from the N-terminus, the 517-residue chain is Maturase K (517 aa).

It belongs to the intron maturase 2 family. MatK subfamily.

Its subcellular location is the plastid. It localises to the chloroplast. Its function is as follows. Usually encoded in the trnK tRNA gene intron. Probably assists in splicing its own and other chloroplast group II introns. This Phalaenopsis japonica (Orchid) protein is Maturase K.